A 253-amino-acid polypeptide reads, in one-letter code: Sulfate transporter CysZ (253 aa).

4 helical membrane-spanning segments follow: residues 31–51, 75–95, 151–171, and 222–242; these read FVIL…WWLF, LLWP…FSTI, IVLL…PVLW, and IPLL…AMWV.

The protein belongs to the CysZ family.

The protein localises to the cell inner membrane. Functionally, high affinity, high specificity proton-dependent sulfate transporter, which mediates sulfate uptake. Provides the sulfur source for the cysteine synthesis pathway. This Shigella flexneri serotype 5b (strain 8401) protein is Sulfate transporter CysZ.